The primary structure comprises 93 residues: Small ribosomal subunit protein uS19 (93 aa).

It belongs to the universal ribosomal protein uS19 family.

Protein S19 forms a complex with S13 that binds strongly to the 16S ribosomal RNA. This is Small ribosomal subunit protein uS19 from Clavibacter michiganensis subsp. michiganensis (strain NCPPB 382).